We begin with the raw amino-acid sequence, 1675 residues long: Coadhesin (1675 aa).

At 1-1356 (QGNYYSYGGT…TIADQADAAK (1356 aa)) the chain is on the extracellular side. Residues 11–160 (TPGTPIGCTN…ICMRVGVESC (150 aa)) form the F5/8 type C 1 domain. TSP type-1 domains are found at residues 168-220 (NGAW…NDCV), 224-279 (NGGW…QFCP), 281-336 (DGGW…QCCP), 338-393 (HGGW…QTCP), 403-458 (NGNY…IPCP), 460-515 (NGNW…TACP), and 517-572 (DGGW…GPCP). Intrachain disulfides connect Cys-180–Cys-216, Cys-184–Cys-219, Cys-194–Cys-206, Cys-236–Cys-273, Cys-240–Cys-278, Cys-251–Cys-263, Cys-293–Cys-330, Cys-297–Cys-335, Cys-308–Cys-320, Cys-350–Cys-387, Cys-354–Cys-392, Cys-365–Cys-377, Cys-415–Cys-452, Cys-419–Cys-457, Cys-430–Cys-442, Cys-472–Cys-509, Cys-476–Cys-514, Cys-487–Cys-499, Cys-528–Cys-566, Cys-532–Cys-571, and Cys-543–Cys-555. The disordered stretch occupies residues 567 to 588 (NKGPCPTSPPTISPPTTGSPAD). VWFA domains lie at 595-769 (DLVF…MDRI), 778-958 (DIGF…FKAL), and 966-1141 (DLTF…ISII). Residues 1144 to 1198 (PSGLSKWSSWSACSKTCRYLGKAGTQIRTRDCKIPELGCDGMRIDTVECNKMDCE) enclose the TSP type-1 8 domain. Disulfide bonds link Cys-1156–Cys-1192, Cys-1160–Cys-1197, and Cys-1175–Cys-1182. An F5/8 type C 2 domain is found at 1192-1336 (CNKMDCEGCG…PCMQAAVFGC (145 aa)). A helical transmembrane segment spans residues 1357-1377 (GILIVLWILAGILTFLLLMAC). Topologically, residues 1378-1675 (CYYCCWHVCC…RGEEWYSRWG (298 aa)) are cytoplasmic. Residues 1463–1480 (EKHVTAEDVKSEKPKYSE) are compositionally biased toward basic and acidic residues. The interval 1463-1491 (EKHVTAEDVKSEKPKYSEEASSGTIKSGS) is disordered. A compositionally biased stretch (polar residues) spans 1481–1491 (EASSGTIKSGS).

Component of the acid-insoluble and acid-soluble organic matrix of the aragonitic skeleton (at protein level).

Its subcellular location is the membrane. The polypeptide is Coadhesin (Acropora millepora (Staghorn coral)).